A 221-amino-acid polypeptide reads, in one-letter code: UPF0328 protein ECU11_2110 (221 aa).

The protein belongs to the UPF0328 family.

This Encephalitozoon cuniculi (strain GB-M1) (Microsporidian parasite) protein is UPF0328 protein ECU11_2110.